An 84-amino-acid polypeptide reads, in one-letter code: Metallothionein-like protein 4A (84 aa).

Residues 1–26 form a disordered region; it reads MADTGKGSSVAGCNDSCGCPSPCPGG.

The protein belongs to the metallothionein superfamily. Type 15 family. Expressed specifically in seeds.

The protein resides in the cytoplasm. It is found in the nucleus. The protein localises to the cell membrane. Functionally, metallothioneins have a high content of cysteine residues that bind various heavy metals. Functions as a metal chelator of copper (Cu) and zinc (Zn). Plays a role in storing and distributing Zn ion in seed. The sequence is that of Metallothionein-like protein 4A (MT4A) from Arabidopsis thaliana (Mouse-ear cress).